A 499-amino-acid polypeptide reads, in one-letter code: Dual specificity protein kinase CLK2 (499 aa).

The segment at 1–67 (MPHPRRYHSS…SYDDRSSDRR (67 aa)) is disordered. Over residues 8–21 (HSSERGSRGSYREH) the composition is skewed to basic and acidic residues. Over residues 22 to 33 (YRSRKHKRRRSR) the composition is skewed to basic residues. Serine 34 carries the post-translational modification Phosphoserine; by PKB/AKT1. A compositionally biased stretch (basic and acidic residues) spans 47-67 (REDSYHVRSRSSYDDRSSDRR). Residue serine 98 is modified to Phosphoserine. A Phosphotyrosine; by autocatalysis modification is found at tyrosine 99. Residues 101–143 (YQRENSSYRSQRSSRRKHRRRRRRSRTFSRSSSQHSSRRAKSV) form a disordered region. The segment covering 112-127 (RSSRRKHRRRRRRSRT) has biased composition (basic residues). Threonine 127 carries the phosphothreonine; by PKB/AKT1 modification. Position 142 is a phosphoserine; by autocatalysis (serine 142). Tyrosine 153 bears the Phosphotyrosine mark. The region spanning 163 to 479 (YEIVSTLGEG…LGEALQHPFF (317 aa)) is the Protein kinase domain. ATP-binding positions include 169 to 177 (LGEGTFGRV) and lysine 193. Aspartate 290 acts as the Proton acceptor in catalysis. A Phosphothreonine; by PKB/AKT2 modification is found at threonine 344.

This sequence belongs to the protein kinase superfamily. CMGC Ser/Thr protein kinase family. Lammer subfamily. In terms of assembly, interacts with RBMX. Interacts with AKT1 and UBL5. Autophosphorylates on all three types of residues. Phosphorylation on Ser-34 and Thr-127 by AKT1 is induced by ionizing radiation or insulin. Phosphorylation plays a critical role in cell proliferation following low dose radiation and prevents cell death following high dose radiation. Phosphorylation at Thr-344 by PKB/AKT2 induces its kinase activity which is required for its stability. The phosphorylation status at Ser-142 influences its subnuclear localization; inhibition of phosphorylation at Ser-142 results in accumulation in the nuclear speckle. In terms of tissue distribution, endothelial cells. Expressed in androgen-dependent prostate cancer cells.

Its subcellular location is the nucleus. The protein resides in the nucleus speckle. It carries out the reaction L-seryl-[protein] + ATP = O-phospho-L-seryl-[protein] + ADP + H(+). The enzyme catalyses L-threonyl-[protein] + ATP = O-phospho-L-threonyl-[protein] + ADP + H(+). The catalysed reaction is L-tyrosyl-[protein] + ATP = O-phospho-L-tyrosyl-[protein] + ADP + H(+). With respect to regulation, 5,6-dichloro-1-b-D-ribofuranosylbenzimidazole (DRB) inhibits autophosphorylation. TG003 inhibits its kinase activity and affects the regulation of alternative splicing mediated by phosphorylation of SR proteins. Its function is as follows. Dual specificity kinase acting on both serine/threonine and tyrosine-containing substrates. Phosphorylates serine- and arginine-rich (SR) proteins of the spliceosomal complex. May be a constituent of a network of regulatory mechanisms that enable SR proteins to control RNA splicing and can cause redistribution of SR proteins from speckles to a diffuse nucleoplasmic distribution. Acts as a suppressor of hepatic gluconeogenesis and glucose output by repressing PPARGC1A transcriptional activity on gluconeogenic genes via its phosphorylation. Phosphorylates PPP2R5B thereby stimulating the assembly of PP2A phosphatase with the PPP2R5B-AKT1 complex leading to dephosphorylation of AKT1. Phosphorylates: PTPN1, SRSF1 and SRSF3. Regulates the alternative splicing of tissue factor (F3) pre-mRNA in endothelial cells. Phosphorylates PAGE4 at several serine and threonine residues and this phosphorylation attenuates the ability of PAGE4 to potentiate the transcriptional activator activity of JUN. In Homo sapiens (Human), this protein is Dual specificity protein kinase CLK2 (CLK2).